The primary structure comprises 283 residues: Aquaporin PIP2-5 (283 aa).

A run of 2 helical transmembrane segments spans residues 37–57 (AVIA…ATVI) and 74–94 (CGGV…FILV). An NPA 1 motif is present at residues 106 to 108 (NPA). A run of 3 helical transmembrane segments spans residues 125-145 (ILYI…VKGF), 167-187 (GTGL…VFSA), and 199-219 (VPVL…LATI). Positions 227-229 (NPA) match the NPA 2 motif. A helical transmembrane segment spans residues 249 to 269 (IFWVGPFIGAAIAALYHQIVL).

Belongs to the MIP/aquaporin (TC 1.A.8) family. PIP (TC 1.A.8.11) subfamily. As to expression, expressed in roots.

It is found in the cell membrane. Water channel required to facilitate the transport of water across cell membrane. May play a role in root water uptake. The polypeptide is Aquaporin PIP2-5 (PIP2-5) (Oryza sativa subsp. japonica (Rice)).